Here is a 289-residue protein sequence, read N- to C-terminus: Paired box protein 5 homolog (289 aa).

The paired DNA-binding region spans 29–155 (SHTGVNQLGG…SSINRIVRNK (127 aa)). A PAI subdomain region spans residues 32 to 88 (GVNQLGGVFVNGRPLADTVRAQIVEMSQHGTRPCDISRQLKVSHGCVSKILGRYYST). Residues 107-155 (RVVECIAGYKRANPTMFAWEIRQKLIEDQICGEENVPSVSSINRIVRNK) are RED subdomain. Composition is skewed to low complexity over residues 166–179 (SVTSSAARPSSATS) and 189–198 (VQQHMQQSTS). The interval 166–198 (SVTSSAARPSSATSHHQRSPPRGVQQHMQQSTS) is disordered.

It localises to the nucleus. The protein resides in the chromosome. Its function is as follows. Transcription factor. Binds to specific DNA sequence motifs in regulatory elements, for example in the genes encoding transcription factor lin-48, apoptosis regulator ced-9 and neuropeptide-like protein nlp-2. Specifies cell fate, playing an essential role in embryonic and larval development. Involved in morphogenesis of the vulva and uterus in hermaphrodites and of the rectal epithelium of the tail in males. Plays multiple roles in the development of the egg-laying system, acting in both lin-3/EGF-pathway-dependent and -independent processes. Positively regulates expression of neuropeptide-like proteins nlp-2 and nlp-7 in uvl cells in an EGF-pathway-dependent manner. Involved in negatively modulating apoptosis in germline and somatic cells, acting in partial redundancy with transcription factor pax-2, probably by directly regulating transcription of ced-9. Positively regulates transcription of lin-48 in hindgut cells and functions in the development of the hindgut. In Caenorhabditis elegans, this protein is Paired box protein 5 homolog.